A 100-amino-acid polypeptide reads, in one-letter code: Urease subunit gamma (100 aa).

This sequence belongs to the urease gamma subunit family. Heterotrimer of UreA (gamma), UreB (beta) and UreC (alpha) subunits. Three heterotrimers associate to form the active enzyme.

The protein resides in the cytoplasm. The catalysed reaction is urea + 2 H2O + H(+) = hydrogencarbonate + 2 NH4(+). It participates in nitrogen metabolism; urea degradation; CO(2) and NH(3) from urea (urease route): step 1/1. The chain is Urease subunit gamma from Mycobacterium sp. (strain JLS).